Here is a 1072-residue protein sequence, read N- to C-terminus: MMSFGSADALLGAPFAPLHGGGSLHYALSRKAGAGGTRSAAGSSSGFHSWARTSVSSVSASPSRFRGAASSTDSLDTLSNGPEGCVAAVAARSEKEQLQALNDRFAGYIDKVRQLEAHNRTLEGEAAALRQQKGRAAMGELYEREVREMRGAVLRLGAARGHVRLEQEHLLEDIAHVRQRLDEEARQREEAEAAARALARFAQEAEAARVELQKKAQALQEECGYLRRHHQEEVGELLGQIQGCGAAQAQAQAEARDALKCDVTSALREIRAQLEGHTVQSTLQSEEWFRVRLDRLSEAAKVNTDAMRSAQEEITEYRRQLQARTTELEALKSTKESLERQRSELEDRHQVDMASYQDAIQQLDNELRNTKWEMAAQLREYQDLLNVKMALDIEIAAYRKLLEGEECRIGFGPSPFSLTEGLPKIPSMSTHIKVKSEEKIKVVEKSEKETVIVEEQTEEIQVTEEVTEEEDKEAQGEEEEEAEEGGEEAATTSPPAEEAASPEKETKSPVKEEAKSPAEAKSPAEAKSPAEAKSPAEVKSPAEVKSPAEAKSPAEAKSPAEVKSPAEVKSPAEAKSPAEAKSPAEVKSPATVKSPGEAKSPAEAKSPAEVKSPVEAKSPAEAKSPASVKSPGEAKSPAEAKSPAEVKSPATVKSPVEAKSPAEVKSPVTVKSPAEAKSPVEVKSPASVKSPSEAKSPAGAKSPAEAKSPVVAKSPAEAKSPAEAKPPAEAKSPAEAKSPAEAKSPAEAKSPAEAKSPVEVKSPEKAKSPVKEGAKSLAEAKSPEKAKSPVKEEIKPPAEVKSPEKAKSPMKEEAKSPEKAKTLDVKSPEAKTPAKEEAKRPADIRSPEQVKSPAKEEAKSPEKEETRTEKVAPKKEEVKSPVEEVKAKEPPKKVEEEKTPATPKTEVKESKKDEAPKEAQKPKAEEKEPLTEKPKDSPGEAKKEEAKEKKAAAPEEETPAKLGVKEEAKPKEKAEDAKAKEPSKPSEKEKPKKEEVPAAPEKKDTKEEKTTESKKPEEKPKMEAKAKEEDKGLPQEPSKPKTEKAEKSSSTDQKDSQPSEKAPEDKAAKGDK.

At Ser-74 the chain carries Phosphoserine. The IF rod domain maps to 94-409 (EKEQLQALND…KLLEGEECRI (316 aa)). Coiled coils occupy residues 98–132 (LQAL…LRQQ), 174–222 (IAHV…LQEE), and 293–380 (LDRL…QLRE). A 55 X 6 AA approximate tandem repeats of K-S-P-[VAGSE]-[KEVTSGA]-[EAVK] region spans residues 278-643 (TVQSTLQSEE…AKSPAEAKSP (366 aa)). Phosphoserine is present on residues Ser-343, Ser-414, and Ser-417. The segment at 454 to 1072 (EEQTEEIQVT…PEDKAAKGDK (619 aa)) is disordered. Residues 455–487 (EQTEEIQVTEEVTEEEDKEAQGEEEEEAEEGGE) are compositionally biased toward acidic residues. Residues 488 to 499 (EAATTSPPAEEA) are compositionally biased toward low complexity. Ser-501 carries the post-translational modification Phosphoserine. The segment covering 501-584 (SPEKETKSPV…KSPAEAKSPA (84 aa)) has biased composition (basic and acidic residues). Tandem repeats lie at residues 507–512 (KSPVKE), 515–520 (KSPAEA), 521–526 (KSPAEA), 527–532 (KSPAEA), 533–538 (KSPAEV), 539–544 (KSPAEV), 545–550 (KSPAEA), 551–556 (KSPAEA), 557–562 (KSPAEV), 563–568 (KSPAEV), 569–574 (KSPAEA), 575–580 (KSPAEA), 581–586 (KSPAEV), 587–592 (KSPATV), 593–598 (KSPGEA), 599–604 (KSPAEA), 605–610 (KSPAEV), 611–616 (KSPVEA), 617–622 (KSPAEA), 623–628 (KSPASV), 629–634 (KSPGEA), 635–640 (KSPAEA), 641–646 (KSPAEV), 647–652 (KSPATV), 653–658 (KSPVEA), 659–664 (KSPAEV), 665–670 (KSPVTV), 671–676 (KSPAEA), 677–682 (KSPVEV), 683–688 (KSPASV), 689–694 (KSPSEA), 695–700 (KSPAGA), 701–706 (KSPAEA), 707–712 (KSPVVA), 713–718 (KSPAEA), and 719–724 (KSPAEA). Ser-516, Ser-522, Ser-528, Ser-534, Ser-540, Ser-546, Ser-552, Ser-558, Ser-564, Ser-570, Ser-576, Ser-582, Ser-588, Ser-594, Ser-600, Ser-606, Ser-612, Ser-618, Ser-624, Ser-627, Ser-630, Ser-636, Ser-642, Ser-648, Ser-654, Ser-660, Ser-666, Ser-672, Ser-678, Ser-684, Ser-687, Ser-690, Ser-696, Ser-702, Ser-708, Ser-714, and Ser-720 each carry phosphoserine. A compositionally biased stretch (basic and acidic residues) spans 600-620 (SPAEAKSPAEVKSPVEAKSPA). Low complexity predominate over residues 621–631 (EAKSPASVKSP). A compositionally biased stretch (basic and acidic residues) spans 720–774 (SPAEAKPPAEAKSPAEAKSPAEAKSPAEAKSPAEAKSPVEVKSPEKAKSPVKEGA). The 37; approximate repeat unit spans residues 725 to 730 (KPPAEA). 7 consecutive repeat copies span residues 731-736 (KSPAEA), 737-742 (KSPAEA), 743-748 (KSPAEA), 749-754 (KSPAEA), 755-760 (KSPVEV), 761-766 (KSPEKA), and 767-772 (KSPVKE). Residues Ser-732, Ser-738, Ser-744, Ser-750, Ser-756, and Ser-762 each carry the phosphoserine modification. Residues 775 to 780 (KSLAEA) form a 45; approximate repeat. Phosphoserine is present on residues Ser-776, Ser-782, and Ser-788. A run of 2 repeats spans residues 781-786 (KSPEKA) and 787-792 (KSPVKE). Composition is skewed to basic and acidic residues over residues 781–953 (KSPE…KAAA) and 963–1072 (GVKE…KGDK). One copy of the 48; approximate repeat lies at 795–800 (KPPAEV). 4 tandem repeats follow at residues 801 to 806 (KSPEKA), 807 to 812 (KSPMKE), 815 to 820 (KSPEKA), and 826 to 831 (KSPEAK). A phosphoserine mark is found at Ser-802, Ser-808, Ser-816, and Ser-827. Thr-832 carries the post-translational modification Phosphothreonine. 5 positions are modified to phosphoserine: Ser-846, Ser-852, Ser-860, Ser-880, and Ser-937. 3 consecutive repeat copies span residues 851–856 (KSPAKE), 859–864 (KSPEKE), and 879–884 (KSPVEE).

This sequence belongs to the intermediate filament family. Forms heterodimers with NEFL; which can further hetero-oligomerize (in vitro). Forms heterodimers with INA (in vitro). In terms of processing, there are a number of repeats of the tripeptide K-S-P, NFH is phosphorylated on a number of the serines in this motif. It is thought that phosphorylation of NFH results in the formation of interfilament cross bridges that are important in the maintenance of axonal caliber. Phosphorylation seems to play a major role in the functioning of the larger neurofilament polypeptides (NF-M and NF-H), the levels of phosphorylation being altered developmentally and coincidentally with a change in the neurofilament function. Post-translationally, phosphorylated in the head and rod regions by the PKC kinase PKN1, leading to the inhibition of polymerization. In terms of tissue distribution, expressed in the dorsal root ganglion neurons (at protein level). Expressed in cutaneous and muscular sensory neurons.

The protein resides in the cytoplasm. It localises to the cytoskeleton. The protein localises to the cell projection. Its subcellular location is the axon. Neurofilaments usually contain three intermediate filament proteins: NEFL, NEFM, and NEFH which are involved in the maintenance of neuronal caliber. NEFH has an important function in mature axons that is not subserved by the two smaller NEF proteins. May additionally cooperate with the neuronal intermediate filament proteins PRPH and INA to form neuronal filamentous networks. In Rattus norvegicus (Rat), this protein is Neurofilament heavy polypeptide (Nefh).